Consider the following 32-residue polypeptide: MASEIFGIAAVFWVLIPVGLLGGVLLLKLQGD.

The helical transmembrane segment at 9–27 (AAVFWVLIPVGLLGGVLLL) threads the bilayer.

Belongs to the PetM family. The 4 large subunits of the cytochrome b6-f complex are cytochrome b6, subunit IV (17 kDa polypeptide, PetD), cytochrome f and the Rieske protein, while the 4 small subunits are PetG, PetL, PetM and PetN. The complex functions as a dimer.

The protein resides in the cellular thylakoid membrane. Component of the cytochrome b6-f complex, which mediates electron transfer between photosystem II (PSII) and photosystem I (PSI), cyclic electron flow around PSI, and state transitions. The polypeptide is Cytochrome b6-f complex subunit 7 (Prochlorococcus marinus (strain NATL1A)).